A 204-amino-acid polypeptide reads, in one-letter code: U1 small nuclear ribonucleoprotein C (204 aa).

The Matrin-type zinc-finger motif lies at 4 to 36; it reads FFCDYCDVYLTHDSMSVRKAHNSGRNHLRNVVD. Residues 65-204 are disordered; the sequence is ANPMLPQNQP…GAGAPGHEKR (140 aa). Pro residues-rich tracts occupy residues 77–154 and 166–192; these read GFPP…PGAP and APPPFPGLPGMPPPGQGFPPGGPPGFA.

This sequence belongs to the U1 small nuclear ribonucleoprotein C family. As to quaternary structure, U1 snRNP is composed of the 7 core Sm proteins B/B', D1, D2, D3, E, F and G that assemble in a heptameric protein ring on the Sm site of the small nuclear RNA to form the core snRNP, and at least 3 U1 snRNP-specific proteins U1-70K, U1-A and U1-C. U1-C interacts with U1 snRNA and the 5' splice-site region of the pre-mRNA.

It is found in the nucleus. Component of the spliceosomal U1 snRNP, which is essential for recognition of the pre-mRNA 5' splice-site and the subsequent assembly of the spliceosome. U1-C is directly involved in initial 5' splice-site recognition for both constitutive and regulated alternative splicing. The interaction with the 5' splice-site seems to precede base-pairing between the pre-mRNA and the U1 snRNA. Stimulates commitment or early (E) complex formation by stabilizing the base pairing of the 5' end of the U1 snRNA and the 5' splice-site region. This Fusarium vanettenii (strain ATCC MYA-4622 / CBS 123669 / FGSC 9596 / NRRL 45880 / 77-13-4) (Fusarium solani subsp. pisi) protein is U1 small nuclear ribonucleoprotein C.